A 367-amino-acid chain; its full sequence is Calcium uniporter protein, mitochondrial (367 aa).

Residues 1 to 12 (MAMPRVLCRVRL) constitute a mitochondrion transit peptide. The Mitochondrial matrix segment spans residues 13–232 (LIHNDFSVIS…LEEKKLELEQ (220 aa)). Residues 61-80 (KQDASSSSSDSDSSDSDEDD) are disordered. Residues 199–233 (REHQLQKEVELTTQLETLQQELLPLEEKKLELEQV) are a coiled coil. The helical transmembrane segment at 233–253 (VANRRSNWMAWAGLGLMSVQF) threads the bilayer. Residues 254 to 262 (GILARLTWW) lie on the Mitochondrial intermembrane side of the membrane. A helical transmembrane segment spans residues 263 to 284 (EYSWDIMEPVTYFVTYGTAMAA). The Selectivity filter signature appears at 266–276 (WDIMEPVTYFV). Glu-270 contacts Ca(2+). At 285-367 (YAYFVLTREE…KKQVEEKAKE (83 aa)) the chain is on the mitochondrial matrix side.

It belongs to the MCU (TC 1.A.77) family. Homotetramer. Component of the uniplex complex, composed of MCU, EMRE, MICU1 and MICU2 in a 4:4:1:1 stoichiometry.

The protein localises to the mitochondrion inner membrane. The enzyme catalyses Ca(2+)(in) = Ca(2+)(out). Its activity is regulated as follows. MCU channel activity is regulated by the heterodimer composed of MICU1 and MICU2, which act as calcium-sensors. At low calcium levels, MICU1 occludes the pore of the MCU channel, preventing mitochondrial calcium uptake. At higher calcium levels, calcium-binding to MICU1 and MICU2 induces a conformational change that weakens MCU-MICU1 interactions and moves the MICU1-MICU2 heterodimer away from the pore, allowing calcium permeation through the channel. Channel-forming and calcium-conducting subunit of the mitochondrial inner membrane calcium uniporter complex (uniplex), which mediates calcium uptake into the mitochondrial matrix. MCU channel activity is regulated by the calcium-sensor subunits of the uniplex MICU1 and MICU2. Mitochondrial calcium homeostasis plays key roles in cellular physiology and regulates ATP production, cytoplasmic calcium signals and activation of cell death pathways. In Tribolium castaneum (Red flour beetle), this protein is Calcium uniporter protein, mitochondrial.